Consider the following 233-residue polypeptide: Orotate phosphoribosyltransferase (233 aa).

Lysine 29 is a 5-phospho-alpha-D-ribose 1-diphosphate binding site. 37 to 38 (FF) contributes to the orotate binding site. Residues 79-80 (YK), arginine 109, lysine 110, lysine 113, histidine 115, and 135-143 (DDVITAGTA) contribute to the 5-phospho-alpha-D-ribose 1-diphosphate site. Orotate contacts are provided by threonine 139 and arginine 167.

It belongs to the purine/pyrimidine phosphoribosyltransferase family. PyrE subfamily. In terms of assembly, homodimer.

The catalysed reaction is orotidine 5'-phosphate + diphosphate = orotate + 5-phospho-alpha-D-ribose 1-diphosphate. It participates in pyrimidine metabolism; UMP biosynthesis via de novo pathway; UMP from orotate: step 1/2. In terms of biological role, catalyzes the transfer of a ribosyl phosphate group from 5-phosphoribose 1-diphosphate to orotate, leading to the formation of orotidine monophosphate (OMP). The protein is Orotate phosphoribosyltransferase (ura-5) of Neurospora crassa (strain ATCC 24698 / 74-OR23-1A / CBS 708.71 / DSM 1257 / FGSC 987).